A 34-amino-acid polypeptide reads, in one-letter code: Photosystem II reaction center protein M (34 aa).

The helical transmembrane segment at 5-25 (ILAFIATALFILIPTAFLLIL) threads the bilayer.

The protein belongs to the PsbM family. As to quaternary structure, PSII is composed of 1 copy each of membrane proteins PsbA, PsbB, PsbC, PsbD, PsbE, PsbF, PsbH, PsbI, PsbJ, PsbK, PsbL, PsbM, PsbT, PsbX, PsbY, PsbZ, Psb30/Ycf12, at least 3 peripheral proteins of the oxygen-evolving complex and a large number of cofactors. It forms dimeric complexes.

It is found in the plastid. The protein resides in the chloroplast thylakoid membrane. One of the components of the core complex of photosystem II (PSII). PSII is a light-driven water:plastoquinone oxidoreductase that uses light energy to abstract electrons from H(2)O, generating O(2) and a proton gradient subsequently used for ATP formation. It consists of a core antenna complex that captures photons, and an electron transfer chain that converts photonic excitation into a charge separation. This subunit is found at the monomer-monomer interface. The polypeptide is Photosystem II reaction center protein M (Angiopteris evecta (Mule's foot fern)).